The sequence spans 76 residues: U-scoloptoxin(15)-Ssd3b (76 aa).

Positions 1-23 are cleaved as a signal peptide; that stretch reads MEKKIIFLCFLVALLTFPEFISS.

Contains 2 disulfide bonds. As to expression, expressed by the venom gland.

Its subcellular location is the secreted. This is U-scoloptoxin(15)-Ssd3b from Scolopendra dehaani (Thai centipede).